The chain runs to 207 residues: Thiamine-phosphate synthase (207 aa).

4-amino-2-methyl-5-(diphosphooxymethyl)pyrimidine is bound by residues 36-40 and N68; that span reads QLRLK. 2 residues coordinate Mg(2+): D69 and D88. A 4-amino-2-methyl-5-(diphosphooxymethyl)pyrimidine-binding site is contributed by T107. 134–136 contributes to the 2-[(2R,5Z)-2-carboxy-4-methylthiazol-5(2H)-ylidene]ethyl phosphate binding site; sequence TGT. K137 is a binding site for 4-amino-2-methyl-5-(diphosphooxymethyl)pyrimidine. G164 is a 2-[(2R,5Z)-2-carboxy-4-methylthiazol-5(2H)-ylidene]ethyl phosphate binding site.

The protein belongs to the thiamine-phosphate synthase family. Mg(2+) serves as cofactor.

The enzyme catalyses 2-[(2R,5Z)-2-carboxy-4-methylthiazol-5(2H)-ylidene]ethyl phosphate + 4-amino-2-methyl-5-(diphosphooxymethyl)pyrimidine + 2 H(+) = thiamine phosphate + CO2 + diphosphate. It catalyses the reaction 2-(2-carboxy-4-methylthiazol-5-yl)ethyl phosphate + 4-amino-2-methyl-5-(diphosphooxymethyl)pyrimidine + 2 H(+) = thiamine phosphate + CO2 + diphosphate. The catalysed reaction is 4-methyl-5-(2-phosphooxyethyl)-thiazole + 4-amino-2-methyl-5-(diphosphooxymethyl)pyrimidine + H(+) = thiamine phosphate + diphosphate. It participates in cofactor biosynthesis; thiamine diphosphate biosynthesis; thiamine phosphate from 4-amino-2-methyl-5-diphosphomethylpyrimidine and 4-methyl-5-(2-phosphoethyl)-thiazole: step 1/1. Condenses 4-methyl-5-(beta-hydroxyethyl)thiazole monophosphate (THZ-P) and 2-methyl-4-amino-5-hydroxymethyl pyrimidine pyrophosphate (HMP-PP) to form thiamine monophosphate (TMP). The sequence is that of Thiamine-phosphate synthase from Rhodospirillum centenum (strain ATCC 51521 / SW).